Here is a 205-residue protein sequence, read N- to C-terminus: Imidazole glycerol phosphate synthase subunit HisH (205 aa).

A Glutamine amidotransferase type-1 domain is found at 3–205 (RIALLDYGMG…LLKNFVEWNI (203 aa)). Cys80 (nucleophile) is an active-site residue. Active-site residues include His185 and Glu187.

In terms of assembly, heterodimer of HisH and HisF.

Its subcellular location is the cytoplasm. The enzyme catalyses 5-[(5-phospho-1-deoxy-D-ribulos-1-ylimino)methylamino]-1-(5-phospho-beta-D-ribosyl)imidazole-4-carboxamide + L-glutamine = D-erythro-1-(imidazol-4-yl)glycerol 3-phosphate + 5-amino-1-(5-phospho-beta-D-ribosyl)imidazole-4-carboxamide + L-glutamate + H(+). It catalyses the reaction L-glutamine + H2O = L-glutamate + NH4(+). It functions in the pathway amino-acid biosynthesis; L-histidine biosynthesis; L-histidine from 5-phospho-alpha-D-ribose 1-diphosphate: step 5/9. IGPS catalyzes the conversion of PRFAR and glutamine to IGP, AICAR and glutamate. The HisH subunit catalyzes the hydrolysis of glutamine to glutamate and ammonia as part of the synthesis of IGP and AICAR. The resulting ammonia molecule is channeled to the active site of HisF. The protein is Imidazole glycerol phosphate synthase subunit HisH of Acinetobacter baylyi (strain ATCC 33305 / BD413 / ADP1).